A 373-amino-acid chain; its full sequence is Spermidine/putrescine import ATP-binding protein PotA (373 aa).

Residues 11–241 (IELRSLKKSY…PSNLFVAKFI (231 aa)) form the ABC transporter domain. Residue 43–50 (GPSGCGKT) participates in ATP binding.

The protein belongs to the ABC transporter superfamily. Spermidine/putrescine importer (TC 3.A.1.11.1) family. In terms of assembly, the complex is composed of two ATP-binding proteins (PotA), two transmembrane proteins (PotB and PotC) and a solute-binding protein (PotD).

The protein resides in the cell inner membrane. The enzyme catalyses ATP + H2O + polyamine-[polyamine-binding protein]Side 1 = ADP + phosphate + polyamineSide 2 + [polyamine-binding protein]Side 1.. Its function is as follows. Part of the ABC transporter complex PotABCD involved in spermidine/putrescine import. Responsible for energy coupling to the transport system. This Mannheimia succiniciproducens (strain KCTC 0769BP / MBEL55E) protein is Spermidine/putrescine import ATP-binding protein PotA.